A 174-amino-acid polypeptide reads, in one-letter code: Chorismate pyruvate-lyase (174 aa).

Substrate-binding residues include Met36, Arg78, Leu116, and Glu157.

The protein belongs to the UbiC family. As to quaternary structure, monomer.

It is found in the cytoplasm. The enzyme catalyses chorismate = 4-hydroxybenzoate + pyruvate. It functions in the pathway cofactor biosynthesis; ubiquinone biosynthesis. Its function is as follows. Removes the pyruvyl group from chorismate, with concomitant aromatization of the ring, to provide 4-hydroxybenzoate (4HB) for the ubiquinone pathway. This chain is Chorismate pyruvate-lyase, found in Yersinia pestis bv. Antiqua (strain Angola).